Consider the following 345-residue polypeptide: Membrane progestin receptor alpha (345 aa).

Topologically, residues 1–74 (MAMAVAQKFN…FQRHNEAVNV (74 aa)) are cytoplasmic. The chain crosses the membrane as a helical span at residues 75-95 (WTHLLAALALLLRLIGLAASV). The Extracellular segment spans residues 96–102 (DFREDPH). The helical transmembrane segment at 103-123 (ALPLFFIVLASFTYLSFSAVA) threads the bilayer. The Cytoplasmic portion of the chain corresponds to 124 to 136 (HLLQAKSEFWHYS). Residues 137–157 (FFFLDYVGVAVYQFGSALAHF) traverse the membrane as a helical segment. At 158–168 (YYAIEPSWHDK) the chain is on the extracellular side. A helical membrane pass occupies residues 169–189 (VQAIFLPTAAFLAWLSCAGSC). At 190-243 (YNKYSQKPGLLGRIFQEAPSALAYVLDISPVLHRIIVSPLPAEEDPALLYHKCQ) the chain is on the cytoplasmic side. The chain crosses the membrane as a helical span at residues 244–264 (VVFFLLAAAFFSTVMPESWFP). At 265 to 268 (GSCH) the chain is on the extracellular side. Residues 269–289 (IFGQGHQVFHVFLVLCTLAQL) traverse the membrane as a helical segment. Residues 290-315 (EAVTLDYQARRGIYEPLHARWPHNFS) are Cytoplasmic-facing. A helical transmembrane segment spans residues 316 to 336 (GLFLLTVASSSLTALLLSQLV). The Extracellular segment spans residues 337-345 (RRKLHQKTK).

This sequence belongs to the ADIPOR family. Detected in most adult tissues. Higher expression found in white fat and liver than brown fat and skeletal muscle.

It localises to the cell membrane. Plasma membrane progesterone (P4) receptor coupled to G proteins. Seems to act through a G(i) mediated pathway. May be involved in oocyte maturation. Involved in neurosteroid inhibition of apoptosis. Also binds dehydroepiandrosterone (DHEA), pregnanolone, pregnenolone and allopregnanolone. The protein is Membrane progestin receptor alpha of Mus musculus (Mouse).